The chain runs to 153 residues: Endoribonuclease YbeY (153 aa).

3 residues coordinate Zn(2+): His114, His118, and His124.

It belongs to the endoribonuclease YbeY family. The cofactor is Zn(2+).

It localises to the cytoplasm. Functionally, single strand-specific metallo-endoribonuclease involved in late-stage 70S ribosome quality control and in maturation of the 3' terminus of the 16S rRNA. This is Endoribonuclease YbeY from Shewanella oneidensis (strain ATCC 700550 / JCM 31522 / CIP 106686 / LMG 19005 / NCIMB 14063 / MR-1).